The primary structure comprises 163 residues: ATP synthase subunit b 1 (163 aa).

The chain crosses the membrane as a helical span at residues 7–27 (AETWVAIAFVILLGVFAYLGV).

The protein belongs to the ATPase B chain family. F-type ATPases have 2 components, F(1) - the catalytic core - and F(0) - the membrane proton channel. F(1) has five subunits: alpha(3), beta(3), gamma(1), delta(1), epsilon(1). F(0) has three main subunits: a(1), b(2) and c(10-14). The alpha and beta chains form an alternating ring which encloses part of the gamma chain. F(1) is attached to F(0) by a central stalk formed by the gamma and epsilon chains, while a peripheral stalk is formed by the delta and b chains.

Its subcellular location is the cell inner membrane. F(1)F(0) ATP synthase produces ATP from ADP in the presence of a proton or sodium gradient. F-type ATPases consist of two structural domains, F(1) containing the extramembraneous catalytic core and F(0) containing the membrane proton channel, linked together by a central stalk and a peripheral stalk. During catalysis, ATP synthesis in the catalytic domain of F(1) is coupled via a rotary mechanism of the central stalk subunits to proton translocation. In terms of biological role, component of the F(0) channel, it forms part of the peripheral stalk, linking F(1) to F(0). This Rhodopseudomonas palustris (strain ATCC BAA-98 / CGA009) protein is ATP synthase subunit b 1.